A 570-amino-acid polypeptide reads, in one-letter code: RNA polymerase I termination factor (570 aa).

Residues 1–16 (MDSVSNLKSTNFQNNN) show a composition bias toward polar residues. Disordered regions lie at residues 1 to 21 (MDSV…PKES), 37 to 68 (HIKK…DMDW), and 100 to 138 (SSMR…AKIK). The segment covering 37 to 56 (HIKKTKKKLKKQKKRKHGSK) has biased composition (basic residues). Residue threonine 64 is modified to Phosphothreonine. Residues 108-137 (RSCHKKSSNSRSERKKHRKRKSSKERKAKI) are compositionally biased toward basic residues. Residues 273–339 (KFTPSEENAL…SIYKHIRRKY (67 aa)) enclose the Myb-like 1 domain. The region spanning 340 to 391 (HIFEQRGKWTPEEDQELARLCLEKEGHWTEVGKLLGRMPEDCRDRWRNYMKC) is the HTH myb-type domain. A DNA-binding region (H-T-H motif) is located at residues 367–389 (WTEVGKLLGRMPEDCRDRWRNYM). Myb-like domains are found at residues 392-486 (GSKR…NKLV) and 493-549 (SMLS…MREK).

As to quaternary structure, interacts with FOB1. Interacts with the RENT complex subunits NET1 and SIR2.

The protein resides in the nucleus. It is found in the nucleolus. Its function is as follows. DNA-binding protein that recognizes sequence-specific replication termini (Ter sites) within rDNA. Binds to rDNA terminator elements and mediates efficient RNA polymerase I transcription termination. Required for rDNA silencing at the non-transcribed spacer 1 (NTS1). Promotes the association of SIR2 with NTS1 and contributes to maintenance of rDNA stability. This is RNA polymerase I termination factor from Saccharomyces cerevisiae (strain ATCC 204508 / S288c) (Baker's yeast).